A 539-amino-acid polypeptide reads, in one-letter code: CTP synthase (539 aa).

The segment at 1-268 (MSFKSIFLTG…SDFLLNKLGF (268 aa)) is amidoligase domain. Ser-14 is a binding site for CTP. Ser-14 serves as a coordination point for UTP. Position 15-20 (15-20 (SLGKGL)) interacts with ATP. L-glutamine is bound at residue Tyr-55. Asp-72 serves as a coordination point for ATP. 2 residues coordinate Mg(2+): Asp-72 and Glu-142. CTP contacts are provided by residues 149 to 151 (DIE), 188 to 193 (KTKPTQ), and Lys-224. UTP is bound by residues 188-193 (KTKPTQ) and Lys-224. The Glutamine amidotransferase type-1 domain maps to 294–532 (RIGLVGKYLE…IRAAKAYSLE (239 aa)). Residue Gly-353 participates in L-glutamine binding. Cys-380 (nucleophile; for glutamine hydrolysis) is an active-site residue. Residues 381–384 (LGMQ), Glu-404, and Arg-460 contribute to the L-glutamine site. Active-site residues include His-505 and Glu-507.

Belongs to the CTP synthase family. Homotetramer.

It catalyses the reaction UTP + L-glutamine + ATP + H2O = CTP + L-glutamate + ADP + phosphate + 2 H(+). The enzyme catalyses L-glutamine + H2O = L-glutamate + NH4(+). The catalysed reaction is UTP + NH4(+) + ATP = CTP + ADP + phosphate + 2 H(+). The protein operates within pyrimidine metabolism; CTP biosynthesis via de novo pathway; CTP from UDP: step 2/2. With respect to regulation, allosterically activated by GTP, when glutamine is the substrate; GTP has no effect on the reaction when ammonia is the substrate. The allosteric effector GTP functions by stabilizing the protein conformation that binds the tetrahedral intermediate(s) formed during glutamine hydrolysis. Inhibited by the product CTP, via allosteric rather than competitive inhibition. Its function is as follows. Catalyzes the ATP-dependent amination of UTP to CTP with either L-glutamine or ammonia as the source of nitrogen. Regulates intracellular CTP levels through interactions with the four ribonucleotide triphosphates. This is CTP synthase from Chlamydia trachomatis serovar A (strain ATCC VR-571B / DSM 19440 / HAR-13).